The chain runs to 420 residues: MNIFNNNLHETDKEINEIIKHEKLRQSSVIELIASENFVSPAVLEAQGALLTNKYAEGYPSKRFYNGCEEVDKAENLAIERVKKLFNCKYANVQPHSGSQANQAVYLALLQPGDTVLGMSLDSGGHLTHGAAPNMSGKWFNAVSYSVNKETYLIDYDEIERLADLHKPKLLIAGFSAYPRNIDFAKFREIVDKVGAYFMADIAHIAGLVATGEHQSPIPYAHAVTSTTHKTLRGPRGGLILSNDEAIGHKINSALFPGLQGGPLMHIIAAKAVAFLENLQPEYKSYIQQVISNAKALASSLQERGYDILTGGTDNHIVLVDLRKDGITGKLAANSLDRAGITCNKNAIPFDETSPFITSGIRLGTPACTTRGFKEKDFVLVGHMVADILDGLKNNEDNSALEQKVLNEVTKLIELFPFYG.

Residues L121 and 125–127 (GHL) each bind (6S)-5,6,7,8-tetrahydrofolate. An N6-(pyridoxal phosphate)lysine modification is found at K230. 354–356 (SPF) provides a ligand contact to (6S)-5,6,7,8-tetrahydrofolate.

It belongs to the SHMT family. In terms of assembly, homodimer. The cofactor is pyridoxal 5'-phosphate.

It is found in the cytoplasm. It catalyses the reaction (6R)-5,10-methylene-5,6,7,8-tetrahydrofolate + glycine + H2O = (6S)-5,6,7,8-tetrahydrofolate + L-serine. It functions in the pathway one-carbon metabolism; tetrahydrofolate interconversion. The protein operates within amino-acid biosynthesis; glycine biosynthesis; glycine from L-serine: step 1/1. Its function is as follows. Catalyzes the reversible interconversion of serine and glycine with tetrahydrofolate (THF) serving as the one-carbon carrier. This reaction serves as the major source of one-carbon groups required for the biosynthesis of purines, thymidylate, methionine, and other important biomolecules. Also exhibits THF-independent aldolase activity toward beta-hydroxyamino acids, producing glycine and aldehydes, via a retro-aldol mechanism. The chain is Serine hydroxymethyltransferase from Rickettsia africae (strain ESF-5).